A 313-amino-acid polypeptide reads, in one-letter code: Acetaldehyde dehydrogenase 3 (313 aa).

NAD(+) is bound at residue 11–14 (SGNI). The Acyl-thioester intermediate role is filled by C129. NAD(+) contacts are provided by residues 160–168 (SAGPGTRAN) and N288.

Belongs to the acetaldehyde dehydrogenase family.

The catalysed reaction is acetaldehyde + NAD(+) + CoA = acetyl-CoA + NADH + H(+). The sequence is that of Acetaldehyde dehydrogenase 3 from Rhizorhabdus wittichii (strain DSM 6014 / CCUG 31198 / JCM 15750 / NBRC 105917 / EY 4224 / RW1) (Sphingomonas wittichii).